The sequence spans 476 residues: Glutamate--tRNA ligase (476 aa).

The short motif at Pro-8–Thr-18 is the 'HIGH' region element. A 'KMSKS' region motif is present at residues Lys-247–Arg-251. Lys-250 serves as a coordination point for ATP.

Belongs to the class-I aminoacyl-tRNA synthetase family. Glutamate--tRNA ligase type 1 subfamily. In terms of assembly, monomer.

It is found in the cytoplasm. It carries out the reaction tRNA(Glu) + L-glutamate + ATP = L-glutamyl-tRNA(Glu) + AMP + diphosphate. Functionally, catalyzes the attachment of glutamate to tRNA(Glu) in a two-step reaction: glutamate is first activated by ATP to form Glu-AMP and then transferred to the acceptor end of tRNA(Glu). This is Glutamate--tRNA ligase from Synechococcus sp. (strain WH7803).